A 254-amino-acid chain; its full sequence is Alcohol dehydrogenase (254 aa).

F10–L33 serves as a coordination point for NAD(+). S138 is a binding site for substrate. Y151 acts as the Proton acceptor in catalysis.

The protein belongs to the short-chain dehydrogenases/reductases (SDR) family. Homodimer.

The catalysed reaction is a primary alcohol + NAD(+) = an aldehyde + NADH + H(+). It catalyses the reaction a secondary alcohol + NAD(+) = a ketone + NADH + H(+). This Drosophila persimilis (Fruit fly) protein is Alcohol dehydrogenase (Adh).